Consider the following 450-residue polypeptide: Protein tweety homolog 1 (450 aa).

Over Met-1–Ala-43 the chain is Extracellular. A helical transmembrane segment spans residues Leu-44 to Val-64. The Cytoplasmic portion of the chain corresponds to Tyr-65 to Gly-88. Residues Cys-89–Phe-109 traverse the membrane as a helical segment. Residues Tyr-110–Trp-214 are Extracellular-facing. Residue Asn-130 is glycosylated (N-linked (GlcNAc...) asparagine). Residues Leu-215 to Leu-235 form a helical membrane-spanning segment. At Ala-236–Lys-240 the chain is on the cytoplasmic side. Residues Trp-241–Met-261 form a helical membrane-spanning segment. The Extracellular portion of the chain corresponds to Gly-262–Glu-390. 2 disulfide bridges follow: Cys-275-Cys-385 and Cys-303-Cys-370. N-linked (GlcNAc...) asparagine glycosylation is found at Asn-284 and Asn-355. Residues Gly-391–Cys-411 form a helical membrane-spanning segment. Over Ser-412–Ile-450 the chain is Cytoplasmic. The tract at residues Glu-427 to Ile-450 is disordered. Residue Ser-440 is modified to Phosphoserine.

Belongs to the tweety family. In terms of assembly, homotetramer; disulfide-linked. Homodimer. N-glycosylated. Contains high-mannose, hybrid and complex oligosaccharides.

The protein localises to the cell membrane. The enzyme catalyses chloride(in) = chloride(out). It carries out the reaction L-glutamate(out) = L-glutamate(in). In terms of biological role, calcium-independent, swelling-dependent volume-regulated anion channel (VRAC-swell) which plays a pivotal role in the process of regulatory volume decrease (RVD) in the brain through the efflux of anions like chloride and organic osmolytes like glutamate. The polypeptide is Protein tweety homolog 1 (TTYH1) (Bos taurus (Bovine)).